The following is a 348-amino-acid chain: Dihydroorotase (348 aa).

Residues histidine 17 and histidine 19 each contribute to the Zn(2+) site. Substrate-binding positions include 19–21 (HLR) and asparagine 45. Zn(2+)-binding residues include lysine 103, histidine 140, and histidine 178. Position 103 is an N6-carboxylysine (lysine 103). Substrate is bound at residue histidine 140. Leucine 223 contributes to the substrate binding site. Aspartate 251 provides a ligand contact to Zn(2+). Aspartate 251 is an active-site residue. Substrate-binding residues include histidine 255 and alanine 267.

This sequence belongs to the metallo-dependent hydrolases superfamily. DHOase family. Class II DHOase subfamily. In terms of assembly, homodimer. The cofactor is Zn(2+).

It catalyses the reaction (S)-dihydroorotate + H2O = N-carbamoyl-L-aspartate + H(+). It functions in the pathway pyrimidine metabolism; UMP biosynthesis via de novo pathway; (S)-dihydroorotate from bicarbonate: step 3/3. Catalyzes the reversible cyclization of carbamoyl aspartate to dihydroorotate. The sequence is that of Dihydroorotase from Salmonella typhi.